Consider the following 304-residue polypeptide: Glycine--tRNA ligase alpha subunit (304 aa).

Belongs to the class-II aminoacyl-tRNA synthetase family. In terms of assembly, tetramer of two alpha and two beta subunits.

The protein resides in the cytoplasm. It catalyses the reaction tRNA(Gly) + glycine + ATP = glycyl-tRNA(Gly) + AMP + diphosphate. The sequence is that of Glycine--tRNA ligase alpha subunit from Yersinia pseudotuberculosis serotype O:1b (strain IP 31758).